The sequence spans 233 residues: 2,3,4,5-tetrahydropyridine-2,6-dicarboxylate N-acetyltransferase (233 aa).

Belongs to the transferase hexapeptide repeat family. DapH subfamily.

It catalyses the reaction (S)-2,3,4,5-tetrahydrodipicolinate + acetyl-CoA + H2O = L-2-acetamido-6-oxoheptanedioate + CoA. Its pathway is amino-acid biosynthesis; L-lysine biosynthesis via DAP pathway; LL-2,6-diaminopimelate from (S)-tetrahydrodipicolinate (acetylase route): step 1/3. Catalyzes the transfer of an acetyl group from acetyl-CoA to tetrahydrodipicolinate. The protein is 2,3,4,5-tetrahydropyridine-2,6-dicarboxylate N-acetyltransferase of Oenococcus oeni (strain ATCC BAA-331 / PSU-1).